Here is a 537-residue protein sequence, read N- to C-terminus: Cytochrome P450 4F6 (537 aa).

Cys-468 contacts heme.

The protein belongs to the cytochrome P450 family. Requires heme as cofactor. High expression in liver and kidney. Lower expression in brain.

Its subcellular location is the endoplasmic reticulum membrane. It is found in the microsome membrane. It catalyses the reaction an organic molecule + reduced [NADPH--hemoprotein reductase] + O2 = an alcohol + oxidized [NADPH--hemoprotein reductase] + H2O + H(+). This is Cytochrome P450 4F6 (Cyp4f6) from Rattus norvegicus (Rat).